Reading from the N-terminus, the 108-residue chain is Evasin P1156 (108 aa).

Residues 1 to 28 (MEVKTYAFLQIAVFIFLGMQIFASLTDA) form the signal peptide. 3 disulfide bridges follow: Cys41-Cys63, Cys45-Cys65, and Cys56-Cys76. An N-linked (GlcNAc...) asparagine glycan is attached at Asn44. The interval 89–108 (NPSDSEIEAAKPKRSDTLSH) is disordered. Over residues 96 to 108 (EAAKPKRSDTLSH) the composition is skewed to basic and acidic residues.

It is found in the secreted. Salivary chemokine-binding protein which has chemokine-neutralizing activity and binds to host chemokines CXCL1, CXCL2, CXCL3, CXCL5, CXCL6 and CXCL8. In Ixodes ricinus (Common tick), this protein is Evasin P1156.